Consider the following 406-residue polypeptide: MNKLFVGSEIGQLRRVILHRPERALSHLTPTNCHNLLFDDVLSVEKALLEHDQFVKTLENQDVDVLLLQDLLEQTLENPEAKEWLLKHQISHYRFGPTFANQIRVFLLEHSNKELASILLGGLAFIELPFKAPSMLQQLSDPFDFVIAPLPNHLFTRDTSCWIYGGVSINPMAKAARKRESNHLRAIYRWHPLFSHHDFARYFEDENRYYDNATIEGGDVLVIGKGNVLVGISERTTPQGIENLAKQLFRTHQAKQVIAIKLPEDRSCMHLDTVMTHMDHNVFSVYPRVIDKNMGCWSITPCGEQHLDIKEMPNFQNVLMSALELDNLNIITTGGDSYEAEREQWHDANNVLTIKPGVVVAYERNTYTNEKYDKAGIHVLPITGDELGRGRGGARCMSCPIERDGI.

The active-site Amidino-cysteine intermediate is Cys-396.

Belongs to the arginine deiminase family.

Its subcellular location is the cytoplasm. It catalyses the reaction L-arginine + H2O = L-citrulline + NH4(+). It functions in the pathway amino-acid degradation; L-arginine degradation via ADI pathway; carbamoyl phosphate from L-arginine: step 1/2. The chain is Arginine deiminase from Aliivibrio fischeri (strain ATCC 700601 / ES114) (Vibrio fischeri).